The sequence spans 649 residues: DNA mismatch repair protein MutL (649 aa).

The interval 339-414 (KKKTKDESVQ…VREEESWQST (76 aa)) is disordered. Residues 342–360 (TKDESVQEQFHFEHTKPKE) show a composition bias toward basic and acidic residues. Residues 388 to 402 (PQLWQQPKQEWQPPQ) show a composition bias toward low complexity.

This sequence belongs to the DNA mismatch repair MutL/HexB family.

This protein is involved in the repair of mismatches in DNA. It is required for dam-dependent methyl-directed DNA mismatch repair. May act as a 'molecular matchmaker', a protein that promotes the formation of a stable complex between two or more DNA-binding proteins in an ATP-dependent manner without itself being part of a final effector complex. In Bacillus cytotoxicus (strain DSM 22905 / CIP 110041 / 391-98 / NVH 391-98), this protein is DNA mismatch repair protein MutL.